The primary structure comprises 320 residues: Malate dehydrogenase (320 aa).

Residues G8–G13 and D33 contribute to the NAD(+) site. 2 residues coordinate substrate: R82 and R88. NAD(+) is bound by residues N95 and I118–N120. Substrate contacts are provided by N120 and R151. H175 functions as the Proton acceptor in the catalytic mechanism.

This sequence belongs to the LDH/MDH superfamily. MDH type 3 family.

It carries out the reaction (S)-malate + NAD(+) = oxaloacetate + NADH + H(+). In terms of biological role, catalyzes the reversible oxidation of malate to oxaloacetate. In Pelagibacter ubique (strain HTCC1062), this protein is Malate dehydrogenase.